The following is a 160-amino-acid chain: Major strawberry allergen Fra a 1-A (160 aa).

This sequence belongs to the BetVI family. As to quaternary structure, monomer.

May be involved in ripening of fruits. In Fragaria ananassa (Strawberry), this protein is Major strawberry allergen Fra a 1-A.